Consider the following 440-residue polypeptide: Glycerophosphocholine cholinephosphodiesterase ENPP6 (440 aa).

The signal sequence occupies residues 1–22; the sequence is MAGKLWTFLLLFGFSWVWPASA. Residues D32, S71, and N92 each coordinate substrate. 2 residues coordinate Zn(2+): D32 and S71. The Nucleophile role is filled by S71. Phosphoserine is present on S71. N100 and N118 each carry an N-linked (GlcNAc...) asparagine glycan. Cysteines 142 and 154 form a disulfide. D193 is a substrate binding site. D193, H197, D240, and H241 together coordinate Zn(2+). H241 contributes to the substrate binding site. A glycan (N-linked (GlcNAc...) asparagine) is linked at N341. H354 is a substrate binding site. H354 lines the Zn(2+) pocket. Residue N404 is glycosylated (N-linked (GlcNAc...) asparagine). Residue S419 is the site of GPI-anchor amidated serine attachment. A propeptide spans 420-440 (removed in mature form); sequence SSPSIPPNSCALVLILLLYFV.

The protein belongs to the nucleotide pyrophosphatase/phosphodiesterase family. Homodimer; disulfide-linked. Homotetramer. It depends on Zn(2+) as a cofactor.

It is found in the cell membrane. It catalyses the reaction sn-glycerol 3-phosphocholine + H2O = phosphocholine + glycerol + H(+). The catalysed reaction is a 1-acyl-sn-glycero-3-phosphocholine + H2O = a 1-acyl-sn-glycerol + phosphocholine + H(+). The enzyme catalyses a 1-O-alkyl-sn-glycero-3-phosphocholine + H2O = a 1-O-alkyl-sn-glycerol + phosphocholine + H(+). It carries out the reaction 1-dodecanoyl-sn-glycero-3-phosphocholine + H2O = 1-dodecanoyl-sn-glycerol + phosphocholine + H(+). It catalyses the reaction 1-hexadecanoyl-sn-glycero-3-phosphocholine + H2O = 1-hexadecanoyl-sn-glycerol + phosphocholine + H(+). The catalysed reaction is 1-(5Z,8Z,11Z,14Z-eicosatetraenoyl)-sn-glycero-3-phosphocholine + H2O = 1-(5Z,8Z,11Z,14Z-eicosatetraenoyl)-sn-glycerol + phosphocholine + H(+). The enzyme catalyses 1-tetradecanoyl-sn-glycero-3-phosphocholine + H2O = 1-tetradecanoyl-sn-glycerol + phosphocholine + H(+). It carries out the reaction sphing-4-enine-phosphocholine + H2O = sphing-4-enine + phosphocholine + H(+). It catalyses the reaction 1-(9Z-octadecenoyl)-sn-glycero-3-phosphocholine + H2O = 1-(9Z-octadecenoyl)-sn-glycerol + phosphocholine + H(+). The catalysed reaction is 1-(9Z,12Z)-octadecadienoyl-sn-glycero-3-phosphocholine + H2O = 1-(9Z,12Z-octadecadienoyl)-sn-glycerol + phosphocholine + H(+). The enzyme catalyses glycero-2-phosphocholine + H2O = phosphocholine + glycerol + H(+). Its activity is regulated as follows. Inhibited by EDTA and EGTA in vitro. Functionally, choline-specific glycerophosphodiesterase that hydrolyzes glycerophosphocholine (GPC) and lysophosphatidylcholine (LPC) and contributes to supplying choline to the cells. Has a preference for LPC with short (12:0 and 14:0) or polyunsaturated (18:2 and 20:4) fatty acids. In vitro, hydrolyzes only choline-containing lysophospholipids, such as sphingosylphosphorylcholine (SPC), platelet-activating factor (PAF) and lysoPAF, but not other lysophospholipids. In Rattus norvegicus (Rat), this protein is Glycerophosphocholine cholinephosphodiesterase ENPP6.